We begin with the raw amino-acid sequence, 200 residues long: Small ribosomal subunit protein uS4 (200 aa).

A disordered region spans residues 22-42 (TGKELEKRPYAPGPHGPGQRK). One can recognise an S4 RNA-binding domain in the interval 92-152 (SRLDNIVYRL…EKSQNLSVVK (61 aa)).

Belongs to the universal ribosomal protein uS4 family. Part of the 30S ribosomal subunit. Contacts protein S5. The interaction surface between S4 and S5 is involved in control of translational fidelity.

Its function is as follows. One of the primary rRNA binding proteins, it binds directly to 16S rRNA where it nucleates assembly of the body of the 30S subunit. With S5 and S12 plays an important role in translational accuracy. The chain is Small ribosomal subunit protein uS4 from Bacillus licheniformis (strain ATCC 14580 / DSM 13 / JCM 2505 / CCUG 7422 / NBRC 12200 / NCIMB 9375 / NCTC 10341 / NRRL NRS-1264 / Gibson 46).